Here is an 844-residue protein sequence, read N- to C-terminus: Janus kinase and microtubule-interacting protein 3 (844 aa).

The stretch at 8–259 (SRAKGDKAET…LSQAKEAERH (252 aa)) forms a coiled coil. The disordered stretch occupies residues 249–290 (QLSQAKEAERHPGSPRRELPYASGAGDASDHSGSPEQQLDEK). A compositionally biased stretch (basic and acidic residues) spans 254-267 (KEAERHPGSPRREL). A compositionally biased stretch (low complexity) spans 270 to 282 (ASGAGDASDHSGS). Residues 289-421 (EKDARRFQLK…DELSKTLETA (133 aa)) adopt a coiled-coil conformation. A Phosphoserine modification is found at S384. The segment covering 466 to 483 (SDGSSISYQTDRTDQTPC) has biased composition (polar residues). Residues 466–488 (SDGSSISYQTDRTDQTPCTPEDD) form a disordered region. Coiled-coil stretches lie at residues 493–621 (MAKE…RERK) and 688–833 (EKWL…LFLF).

It belongs to the JAKMIP family.

The protein resides in the golgi apparatus. This Mus musculus (Mouse) protein is Janus kinase and microtubule-interacting protein 3 (Jakmip3).